We begin with the raw amino-acid sequence, 181 residues long: Large ribosomal subunit protein uL6m (181 aa).

Belongs to the universal ribosomal protein uL6 family.

It is found in the mitochondrion. The chain is Large ribosomal subunit protein uL6m (RPL6) from Acanthamoeba castellanii (Amoeba).